The chain runs to 638 residues: 1-deoxy-D-xylulose-5-phosphate synthase (638 aa).

Residues His77 and 118-120 (AHA) each bind thiamine diphosphate. Asp149 provides a ligand contact to Mg(2+). Residues 150–151 (GS), Asn178, Tyr287, and Glu369 contribute to the thiamine diphosphate site. Mg(2+) is bound at residue Asn178.

It belongs to the transketolase family. DXPS subfamily. As to quaternary structure, homodimer. Requires Mg(2+) as cofactor. The cofactor is thiamine diphosphate.

The enzyme catalyses D-glyceraldehyde 3-phosphate + pyruvate + H(+) = 1-deoxy-D-xylulose 5-phosphate + CO2. The protein operates within metabolic intermediate biosynthesis; 1-deoxy-D-xylulose 5-phosphate biosynthesis; 1-deoxy-D-xylulose 5-phosphate from D-glyceraldehyde 3-phosphate and pyruvate: step 1/1. Its function is as follows. Catalyzes the acyloin condensation reaction between C atoms 2 and 3 of pyruvate and glyceraldehyde 3-phosphate to yield 1-deoxy-D-xylulose-5-phosphate (DXP). The polypeptide is 1-deoxy-D-xylulose-5-phosphate synthase (Phenylobacterium zucineum (strain HLK1)).